The primary structure comprises 346 residues: Uroporphyrinogen decarboxylase (346 aa).

Substrate-binding positions include 21 to 25 (RQAGR), Asp-71, Tyr-146, Ser-201, and His-316.

Belongs to the uroporphyrinogen decarboxylase family. In terms of assembly, homodimer.

Its subcellular location is the cytoplasm. The enzyme catalyses uroporphyrinogen III + 4 H(+) = coproporphyrinogen III + 4 CO2. It functions in the pathway porphyrin-containing compound metabolism; protoporphyrin-IX biosynthesis; coproporphyrinogen-III from 5-aminolevulinate: step 4/4. Its function is as follows. Catalyzes the decarboxylation of four acetate groups of uroporphyrinogen-III to yield coproporphyrinogen-III. The sequence is that of Uroporphyrinogen decarboxylase from Rickettsia africae (strain ESF-5).